The sequence spans 430 residues: Enolase (430 aa).

Residue Gln163 coordinates (2R)-2-phosphoglycerate. Glu205 acts as the Proton donor in catalysis. Positions 242, 288, and 315 each coordinate Mg(2+). Positions 340, 369, 370, and 391 each coordinate (2R)-2-phosphoglycerate. Catalysis depends on Lys340, which acts as the Proton acceptor.

It belongs to the enolase family. Requires Mg(2+) as cofactor.

The protein resides in the cytoplasm. Its subcellular location is the secreted. It is found in the cell surface. It carries out the reaction (2R)-2-phosphoglycerate = phosphoenolpyruvate + H2O. The protein operates within carbohydrate degradation; glycolysis; pyruvate from D-glyceraldehyde 3-phosphate: step 4/5. Catalyzes the reversible conversion of 2-phosphoglycerate (2-PG) into phosphoenolpyruvate (PEP). It is essential for the degradation of carbohydrates via glycolysis. The polypeptide is Enolase (Acidobacterium capsulatum (strain ATCC 51196 / DSM 11244 / BCRC 80197 / JCM 7670 / NBRC 15755 / NCIMB 13165 / 161)).